The chain runs to 76 residues: Histone acetyltransferase (76 aa).

In terms of assembly, physically interacts with histone H3 in infected macrophages.

The protein resides in the secreted. It is found in the host cytoplasm. The protein localises to the host nucleus. The enzyme catalyses L-lysyl-[protein] + acetyl-CoA = N(6)-acetyl-L-lysyl-[protein] + CoA + H(+). Its activity is regulated as follows. Is completely inhibited by anacardic acid, an inhibitor of HAT activity. Functionally, histone acetyltransferase, which by binding to the host chromatin, may manipulate the expression of host genes involved in anti-inflammatory responses to evade clearance and to survive in the intracellular milieu. Acetylates histone H3 at the 'Lys-9' and 'Lys-14' positions. This Mycobacterium tuberculosis (strain CDC 1551 / Oshkosh) protein is Histone acetyltransferase.